A 760-amino-acid chain; its full sequence is 5-methyltetrahydropteroyltriglutamate--homocysteine methyltransferase (760 aa).

5-methyltetrahydropteroyltri-L-glutamate is bound by residues Arg17–Lys20 and Lys118. Residues Ile434–Ser436 and Glu487 contribute to the L-homocysteine site. L-methionine contacts are provided by residues Ile434–Ser436 and Glu487. 5-methyltetrahydropteroyltri-L-glutamate is bound by residues Arg518–Cys519 and Trp564. An L-homocysteine-binding site is contributed by Asp602. Residue Asp602 participates in L-methionine binding. 5-methyltetrahydropteroyltri-L-glutamate is bound at residue Glu608. 3 residues coordinate Zn(2+): His644, Cys646, and Glu668. The active-site Proton donor is the His697. Cys729 is a Zn(2+) binding site.

Belongs to the vitamin-B12 independent methionine synthase family. Requires Zn(2+) as cofactor.

It catalyses the reaction 5-methyltetrahydropteroyltri-L-glutamate + L-homocysteine = tetrahydropteroyltri-L-glutamate + L-methionine. It participates in amino-acid biosynthesis; L-methionine biosynthesis via de novo pathway; L-methionine from L-homocysteine (MetE route): step 1/1. Its function is as follows. Catalyzes the transfer of a methyl group from 5-methyltetrahydrofolate to homocysteine resulting in methionine formation. This is 5-methyltetrahydropteroyltriglutamate--homocysteine methyltransferase from Buchnera aphidicola subsp. Cinara cedri (strain Cc).